The following is a 230-amino-acid chain: Probable septum site-determining protein MinC (230 aa).

The protein belongs to the MinC family. As to quaternary structure, interacts with MinD and FtsZ.

Cell division inhibitor that blocks the formation of polar Z ring septums. Rapidly oscillates between the poles of the cell to destabilize FtsZ filaments that have formed before they mature into polar Z rings. Prevents FtsZ polymerization. This Cronobacter sakazakii (strain ATCC BAA-894) (Enterobacter sakazakii) protein is Probable septum site-determining protein MinC.